The following is a 111-amino-acid chain: Large ribosomal subunit protein uL22 (111 aa).

This sequence belongs to the universal ribosomal protein uL22 family. As to quaternary structure, part of the 50S ribosomal subunit.

Functionally, this protein binds specifically to 23S rRNA; its binding is stimulated by other ribosomal proteins, e.g. L4, L17, and L20. It is important during the early stages of 50S assembly. It makes multiple contacts with different domains of the 23S rRNA in the assembled 50S subunit and ribosome. The globular domain of the protein is located near the polypeptide exit tunnel on the outside of the subunit, while an extended beta-hairpin is found that lines the wall of the exit tunnel in the center of the 70S ribosome. The polypeptide is Large ribosomal subunit protein uL22 (Chlamydia trachomatis serovar A (strain ATCC VR-571B / DSM 19440 / HAR-13)).